A 431-amino-acid chain; its full sequence is UDP-N-acetylmuramate--L-alanine ligase (431 aa).

Residue 108-114 participates in ATP binding; that stretch reads GSHGKTS.

The protein belongs to the MurCDEF family.

The protein resides in the cytoplasm. The enzyme catalyses UDP-N-acetyl-alpha-D-muramate + L-alanine + ATP = UDP-N-acetyl-alpha-D-muramoyl-L-alanine + ADP + phosphate + H(+). It functions in the pathway cell wall biogenesis; peptidoglycan biosynthesis. Functionally, cell wall formation. This is UDP-N-acetylmuramate--L-alanine ligase from Macrococcus caseolyticus (strain JCSC5402) (Macrococcoides caseolyticum).